A 97-amino-acid polypeptide reads, in one-letter code: Large ribosomal subunit protein bL28 (97 aa).

The protein belongs to the bacterial ribosomal protein bL28 family.

The sequence is that of Large ribosomal subunit protein bL28 from Rickettsia canadensis (strain McKiel).